The following is a 424-amino-acid chain: Hemagglutinin-esterase (424 aa).

2 consecutive signal peptides follow at residues 1-16 and 1-18; these read MFLLLRFVLVSCIIGS and MFLLLRFVLVSCIIGSLG. The interval 7–127 is esterase domain 1; that stretch reads FVLVSCIIGS…SNDIWMQNKG (121 aa). The Virion surface portion of the chain corresponds to 17–392; the sequence is LGFDNPPTNV…PICVYDPLPL (376 aa). Serine 40 functions as the Nucleophile in the catalytic mechanism. A disulfide bridge connects residues cysteine 44 and cysteine 65. 5 N-linked (GlcNAc...) asparagine; by host glycosylation sites follow: asparagine 54, asparagine 89, asparagine 153, asparagine 236, and asparagine 301. Cystine bridges form between cysteine 113–cysteine 162, cysteine 197–cysteine 276, and cysteine 205–cysteine 249. Residues 128–266 are receptor binding; the sequence is LFYTQVYKNM…GNYLAISNEL (139 aa). Residues 267 to 379 form an esterase domain 2 region; that stretch reads LLTVPTKAIC…RCPTAADINT (113 aa). The cysteines at positions 307 and 312 are disulfide-linked. N-linked (GlcNAc...) asparagine; by host glycosylation occurs at asparagine 316. Residues aspartate 326 and histidine 329 each act as charge relay system in the active site. A disulfide bridge connects residues cysteine 347 and cysteine 371. A glycan (N-linked (GlcNAc...) asparagine; by host) is linked at asparagine 358. The chain crosses the membrane as a helical span at residues 393-413; that stretch reads ILLGILLGVAVIIIVVLLLYF. The Intravirion portion of the chain corresponds to 414 to 424; sequence MVDNGTRLHDA. A glycan (N-linked (GlcNAc...) asparagine; by host) is linked at asparagine 417.

Belongs to the influenza type C/coronaviruses hemagglutinin-esterase family. Homodimer; disulfide-linked. Forms a complex with the M protein in the pre-Golgi. Associates then with S-M complex to form a ternary complex S-M-HE. N-glycosylated in the host RER.

The protein localises to the virion membrane. It localises to the host cell membrane. It catalyses the reaction N-acetyl-9-O-acetylneuraminate + H2O = N-acetylneuraminate + acetate + H(+). The enzyme catalyses N-acetyl-4-O-acetylneuraminate + H2O = N-acetylneuraminate + acetate + H(+). Its function is as follows. Structural protein that makes short spikes at the surface of the virus. Contains receptor binding and receptor-destroying activities. Mediates de-O-acetylation of N-acetyl-4-O-acetylneuraminic acid, which is probably the receptor determinant recognized by the virus on the surface of erythrocytes and susceptible cells. This receptor-destroying activity is important for virus release as it probably helps preventing self-aggregation and ensures the efficient spread of the progeny virus from cell to cell. May serve as a secondary viral attachment protein for initiating infection, the spike protein being the major one. May become a target for both the humoral and the cellular branches of the immune system. This is Hemagglutinin-esterase from Bos taurus (Bovine).